We begin with the raw amino-acid sequence, 303 residues long: Porphobilinogen deaminase (303 aa).

S-(dipyrrolylmethanemethyl)cysteine is present on cysteine 241.

The protein belongs to the HMBS family. In terms of assembly, monomer. Dipyrromethane is required as a cofactor.

It carries out the reaction 4 porphobilinogen + H2O = hydroxymethylbilane + 4 NH4(+). It participates in porphyrin-containing compound metabolism; protoporphyrin-IX biosynthesis; coproporphyrinogen-III from 5-aminolevulinate: step 2/4. The protein operates within porphyrin-containing compound metabolism; chlorophyll biosynthesis. Tetrapolymerization of the monopyrrole PBG into the hydroxymethylbilane pre-uroporphyrinogen in several discrete steps. This chain is Porphobilinogen deaminase, found in Roseiflexus castenholzii (strain DSM 13941 / HLO8).